The chain runs to 40 residues: Photosystem I reaction center subunit IX (40 aa).

A helical transmembrane segment spans residues 12-34; that stretch reads APVLLTAWMSLTAGMIIEIQRFF.

Belongs to the PsaJ family.

It is found in the plastid. It localises to the chloroplast thylakoid membrane. May help in the organization of the PsaE and PsaF subunits. The protein is Photosystem I reaction center subunit IX of Emiliania huxleyi (Coccolithophore).